We begin with the raw amino-acid sequence, 193 residues long: dCTP deaminase, dUMP-forming (193 aa).

DCTP-binding positions include Lys101–Arg106, Asp119, Thr127–Glu129, Gln148, Tyr162, and Gln174. Glu129 (proton donor/acceptor) is an active-site residue.

This sequence belongs to the dCTP deaminase family. Homotrimer.

It catalyses the reaction dCTP + 2 H2O = dUMP + NH4(+) + diphosphate. The protein operates within pyrimidine metabolism; dUMP biosynthesis; dUMP from dCTP: step 1/1. Bifunctional enzyme that catalyzes both the deamination of dCTP to dUTP and the hydrolysis of dUTP to dUMP without releasing the toxic dUTP intermediate. This is dCTP deaminase, dUMP-forming from Bifidobacterium adolescentis (strain ATCC 15703 / DSM 20083 / NCTC 11814 / E194a).